We begin with the raw amino-acid sequence, 204 residues long: Methylthioribulose-1-phosphate dehydratase (204 aa).

2 residues coordinate Zn(2+): His-94 and His-96.

This sequence belongs to the aldolase class II family. MtnB subfamily. Zn(2+) is required as a cofactor.

It carries out the reaction 5-(methylsulfanyl)-D-ribulose 1-phosphate = 5-methylsulfanyl-2,3-dioxopentyl phosphate + H2O. The protein operates within amino-acid biosynthesis; L-methionine biosynthesis via salvage pathway; L-methionine from S-methyl-5-thio-alpha-D-ribose 1-phosphate: step 2/6. Catalyzes the dehydration of methylthioribulose-1-phosphate (MTRu-1-P) into 2,3-diketo-5-methylthiopentyl-1-phosphate (DK-MTP-1-P). The sequence is that of Methylthioribulose-1-phosphate dehydratase from Serratia proteamaculans (strain 568).